The sequence spans 425 residues: UDP-N-acetylglucosamine 1-carboxyvinyltransferase (425 aa).

22-23 (KN) is a phosphoenolpyruvate binding site. Residue R91 coordinates UDP-N-acetyl-alpha-D-glucosamine. C115 (proton donor) is an active-site residue. C115 carries the post-translational modification 2-(S-cysteinyl)pyruvic acid O-phosphothioketal. UDP-N-acetyl-alpha-D-glucosamine contacts are provided by residues 120–124 (RPIDL), D305, and V327.

This sequence belongs to the EPSP synthase family. MurA subfamily.

The protein resides in the cytoplasm. It carries out the reaction phosphoenolpyruvate + UDP-N-acetyl-alpha-D-glucosamine = UDP-N-acetyl-3-O-(1-carboxyvinyl)-alpha-D-glucosamine + phosphate. It participates in cell wall biogenesis; peptidoglycan biosynthesis. Functionally, cell wall formation. Adds enolpyruvyl to UDP-N-acetylglucosamine. This chain is UDP-N-acetylglucosamine 1-carboxyvinyltransferase, found in Coprothermobacter proteolyticus (strain ATCC 35245 / DSM 5265 / OCM 4 / BT).